Reading from the N-terminus, the 289-residue chain is Urease accessory protein UreD (289 aa).

It belongs to the UreD family. As to quaternary structure, ureD, UreF and UreG form a complex that acts as a GTP-hydrolysis-dependent molecular chaperone, activating the urease apoprotein by helping to assemble the nickel containing metallocenter of UreC. The UreE protein probably delivers the nickel.

It is found in the cytoplasm. In terms of biological role, required for maturation of urease via the functional incorporation of the urease nickel metallocenter. This is Urease accessory protein UreD from Magnetococcus marinus (strain ATCC BAA-1437 / JCM 17883 / MC-1).